A 159-amino-acid polypeptide reads, in one-letter code: Protein Smg homolog (159 aa).

It belongs to the Smg family.

This chain is Protein Smg homolog, found in Dichelobacter nodosus (strain VCS1703A).